The following is a 1537-amino-acid chain: MKDFSKVRIAIASPAKIREWSFGEVEKPETINYRTLKPEREGLFDERIFGPIKDYECACGKYKRQRYEGKVCERCGVEVTSSKVRRYRMGHIDLATPAAHIWYVKDTPSKIGTLLDLSAAQLEKVLYFSSFLVTDPRNAQKDGRPLRRGELLSDDEYRELRFGRQETYTLPSGTEAAVRDGEYVTRGQVLGGNVVSKMDGLAQYRFPRRAEIAYAEEAEASLPLPSDVLVQQDSFRPGEILAELEGDVQITAPVDGTAFLLDMGEDSVLVELRDSAAEDAAQGEVLARVYIPHGMNVQVAEGEVVEAGSVLATAAAGDRLRVSRDSRLSNVNFPKKKGDVKVTAHWTRRVEYRIEPQMHVLVGDGSEVRKGQKVVGAIDKEEEVIAEADGVITLHAPASIIVSKARVYAYQDEPLVVNGDRVEPGDELADSGNLRSEISGRVEIDLVRKQVRVIESYDFEAKMGAEAVKELLDDLDLDQLEAELSEQMKDNSRHKRAKARKRLEVVRAFKRSGNHPSWMILETVPVMPPDLRPMVQVDGGRFATSDLNDLYRRLINRNNRLKKLIGQGAPDMIIRNEKRMLQEAVDALIDNGRRGSPVTNPGSDRSLRSLTDLLGGKQGRFRQNLLGKRVDYSGRSVIVVGPQLKLHQCGVPKRMALELFKPFLFKVLEEKGEVTNIKQARKMLERYRDTRDSVWDALEEVIEDKVVLLNRAPTLHRLGIQAFEPVLVEGQSIQLHPLVCEAFNADFDGDQMAIHVPLSAQAQAEARIQMLSAHNLLSPANGEPNVKPSRDIILGIFTLTQLRKDNLGAGSEFANEQDALKALDEGRVALNTPIRVNGVETSPGRLKYVFSSPDEAIMAVDRGEIDYQDHVRIRLNGTVYETSAGRVMFRRLVQEALGAQGHLVDTLVNLDTAYEKDSLKDMVMACYKELGIEATAGLLDALKDSGFKLSTISGITIGIDDIVLPPNKRELLAEADEKLAAIEQNYEFGFMTDEERYKQVVQLWNDTTDEVKNAVFENFSRNYPFNPLWIMSQSGARGNPQQIRQLAGMRGLMARPDGSTIEVPIRASFREGLTVLEYFISTHGARKGGADTALRTADSGYLTRKLVDVAHEVVVRDVDCGTTDYTVMPLGTTDERTGEWRTRKGSEIETAIYGRTLTADVELSDGRVIPAGQMLSLEDVKAITRDAKAIGEVFVRTPLNCRVRAGVCQKCYGYDLSQAKPVSLGEAVGVVAAESIGEPGTQLTMRTFHTGGVAGGGDITMGLPRVIELFEARKPKTQAVVADRDGVVRIEEEEERYLVRIEAEDEAFSSKTPMKISKSLRLIVRDGDHVEAGQPLTRGAINPHDLLLYKDTDAAQRYLVEEVQRVYRSQGVKVHDKHIEVIVRQMLRYVEITDGGDTDLLEGQTVERWEVDQANDALPEGKTPASWKPVLLGITKSSLTTKSWLSAASFQHTTHVLTEASMRGQVDELIGLKENVILGKLIPAGTGLTTVREMQVADERTLEKYGQTSVSTDAVTGSQRYDDTRPSSTSINPSYGD.

Cys-57, Cys-59, Cys-72, and Cys-75 together coordinate Zn(2+). Asp-746, Asp-748, and Asp-750 together coordinate Mg(2+). Cys-1120, Cys-1201, Cys-1208, and Cys-1211 together coordinate Zn(2+). Positions 1502-1537 (LEKYGQTSVSTDAVTGSQRYDDTRPSSTSINPSYGD) are disordered. Composition is skewed to polar residues over residues 1506–1519 (GQTS…TGSQ) and 1526–1537 (PSSTSINPSYGD).

The protein belongs to the RNA polymerase beta' chain family. As to quaternary structure, the RNAP catalytic core consists of 2 alpha, 1 beta, 1 beta' and 1 omega subunit. When a sigma factor is associated with the core the holoenzyme is formed, which can initiate transcription. Mg(2+) is required as a cofactor. Zn(2+) serves as cofactor.

It carries out the reaction RNA(n) + a ribonucleoside 5'-triphosphate = RNA(n+1) + diphosphate. Functionally, DNA-dependent RNA polymerase catalyzes the transcription of DNA into RNA using the four ribonucleoside triphosphates as substrates. This Deinococcus geothermalis (strain DSM 11300 / CIP 105573 / AG-3a) protein is DNA-directed RNA polymerase subunit beta'.